A 165-amino-acid chain; its full sequence is Transcriptional repressor NrdR (165 aa).

A zinc finger spans residues 3-34 (CPFCRHPDSRVVDSREADEGQAIRRRRSCPEC). The 91-residue stretch at 46-136 (LSVVKRSGVT…VYKSFSSAAD (91 aa)) folds into the ATP-cone domain.

This sequence belongs to the NrdR family. The cofactor is Zn(2+).

Negatively regulates transcription of bacterial ribonucleotide reductase nrd genes and operons by binding to NrdR-boxes. The polypeptide is Transcriptional repressor NrdR (Rhodococcus erythropolis (strain PR4 / NBRC 100887)).